A 158-amino-acid polypeptide reads, in one-letter code: 6,7-dimethyl-8-ribityllumazine synthase (158 aa).

5-amino-6-(D-ribitylamino)uracil contacts are provided by residues F23, 61-63 (SFE), and 85-87 (AVI). 90–91 (DT) is a binding site for (2S)-2-hydroxy-3-oxobutyl phosphate. The active-site Proton donor is H93. A 5-amino-6-(D-ribitylamino)uracil-binding site is contributed by F118. Residue R132 coordinates (2S)-2-hydroxy-3-oxobutyl phosphate.

This sequence belongs to the DMRL synthase family.

The enzyme catalyses (2S)-2-hydroxy-3-oxobutyl phosphate + 5-amino-6-(D-ribitylamino)uracil = 6,7-dimethyl-8-(1-D-ribityl)lumazine + phosphate + 2 H2O + H(+). The protein operates within cofactor biosynthesis; riboflavin biosynthesis; riboflavin from 2-hydroxy-3-oxobutyl phosphate and 5-amino-6-(D-ribitylamino)uracil: step 1/2. In terms of biological role, catalyzes the formation of 6,7-dimethyl-8-ribityllumazine by condensation of 5-amino-6-(D-ribitylamino)uracil with 3,4-dihydroxy-2-butanone 4-phosphate. This is the penultimate step in the biosynthesis of riboflavin. The sequence is that of 6,7-dimethyl-8-ribityllumazine synthase from Prochlorococcus marinus (strain NATL2A).